A 206-amino-acid chain; its full sequence is Uridine kinase (206 aa).

11-18 (GGTGSGKS) serves as a coordination point for ATP.

Belongs to the uridine kinase family.

The protein localises to the cytoplasm. The catalysed reaction is uridine + ATP = UMP + ADP + H(+). The enzyme catalyses cytidine + ATP = CMP + ADP + H(+). It functions in the pathway pyrimidine metabolism; CTP biosynthesis via salvage pathway; CTP from cytidine: step 1/3. It participates in pyrimidine metabolism; UMP biosynthesis via salvage pathway; UMP from uridine: step 1/1. The sequence is that of Uridine kinase from Clostridium botulinum (strain Langeland / NCTC 10281 / Type F).